The sequence spans 635 residues: MSVETQKETLGFQTEVKQLLHLMIHSLYSNKEIFLRELISNASDAVDKLRFEALSRPELLEGGAELKIRVSFDKDAKTVTLEDNGIGMSREDVITHLGTIAKSGTADFMKNLSGDQKKDSHLIGQFGVGFYSAFIVADQVEVFSRRAGSPSSEGVHWSSKGEGEFEVANVDKAERGTRIVLHLKNGEEEFADGYRLRNIIKKYSDHIALPIELPKEQAPAAEGEEAPAQEWETVNRASALWTRPRTEVKDEEYQEFYKHVAHDYENPLSWSHNKVEGKLEYTSLLYVPARAPFDLYQREAPRGLKLYVQRVFVMDQAESFLPLYMRFVKGVVDSNDLSLNVSREILQKDPIIDSMKSALTKRVLDMLEKLAKNEPEQYKGFWKNFGQVLKEGPAEDFANKEKIAGLLRFASTSDDSGEQSVSLADYLARGKEGQDKIYYLTGESYAQVRNSPHLEVFRKKGIEVLLLTDRIDEWLMSYLSDFDGKNFVDVARGDLDLGNLDSEEDKKAQEEIAKDKEGLIERLKAALGESVSEVRVSHRLTDSPAILAIGEQDMGLQMRQILEASGQKVPDSKPIFEFNPAHPLIGKLDAEQSEERFGDLSHILFDQAALAAGDSLKDPAAYVRRLNKLLVELSV.

The a; substrate-binding stretch occupies residues Met1–Arg343. A b region spans residues Glu344–Gln560. Residues Ile561–Val635 form a c region.

This sequence belongs to the heat shock protein 90 family. Homodimer.

The protein resides in the cytoplasm. In terms of biological role, molecular chaperone. Has ATPase activity. The protein is Chaperone protein HtpG of Pseudomonas syringae pv. tomato (strain ATCC BAA-871 / DC3000).